Consider the following 351-residue polypeptide: MQVSDFHFDLPNELIARYPQPERTASRLLQLTGETGNIQHKGFKDVLDLAESGDLFVFNNTRVIPARIFGRKASGGKIEVLVERILDDKSILAHVRASKSPKPGNELLLGENDDYQAEMIARHDTLFEIRFNSDKTVLEILEEVGHMPLPPYIDRPDEDADKERYQTVYNAKPGAVAAPTAGLHFDDKLMAALKAKGVNFAFVTLHVGAGTFQPVRVDNIDDHHMHSEYVEVPQDVVDAVNATKANGGRIIAVGTTSVRSLESAAQDAVKKGTELVPFFGDTEIFIFPGYEFQLVDVLVTNFHLPESTLIMLVSAFAGYEHTMNAYLQAVDNKYRFFSYGDSMFITRRNNV.

This sequence belongs to the QueA family. As to quaternary structure, monomer.

The protein resides in the cytoplasm. The catalysed reaction is 7-aminomethyl-7-carbaguanosine(34) in tRNA + S-adenosyl-L-methionine = epoxyqueuosine(34) in tRNA + adenine + L-methionine + 2 H(+). It functions in the pathway tRNA modification; tRNA-queuosine biosynthesis. In terms of biological role, transfers and isomerizes the ribose moiety from AdoMet to the 7-aminomethyl group of 7-deazaguanine (preQ1-tRNA) to give epoxyqueuosine (oQ-tRNA). The chain is S-adenosylmethionine:tRNA ribosyltransferase-isomerase from Photobacterium profundum (strain SS9).